A 130-amino-acid chain; its full sequence is Small ribosomal subunit protein uS9 (130 aa).

The protein belongs to the universal ribosomal protein uS9 family.

The protein is Small ribosomal subunit protein uS9 of Paraburkholderia phytofirmans (strain DSM 17436 / LMG 22146 / PsJN) (Burkholderia phytofirmans).